Reading from the N-terminus, the 170-residue chain is Cathelicidin antimicrobial peptide (170 aa).

The signal sequence occupies residues 1–30; it reads MKTQRHGPSLGRWSLVLLLLGLVMPLAIVA. A propeptide spans 31–131 (cathelin-like domain (CLD)); sequence QVLSYQEAVL…DISCDKDNRR (101 aa). Intrachain disulfides connect Cys-86-Cys-97 and Cys-108-Cys-125. The tract at residues 150-162 is active core; sequence LKKIGQKIKDFWG.

It belongs to the cathelicidin family. In terms of assembly, monomer, homodimer or homotrimer (in vitro). Oligomerizes as tetra- or hexamer in solution (in vitro). Proteolytically cleaved by proteinase PRTN3 into antibacterial peptide LL-37. Proteolytically cleaved by cathepsin CTSG and neutrophil elastase ELANE. Post-translationally, resistant to proteolytic degradation in solution, and when bound to both zwitterionic (mimicking mammalian membranes) and negatively charged membranes (mimicking bacterial membranes). In terms of processing, after secretion onto the skin surface, the CAMP gene product is processed by a serine protease-dependent mechanism into multiple novel antimicrobial peptides distinct from and shorter than cathelicidin LL-37. These peptides show enhanced antimicrobial action, acquiring the ability to kill skin pathogens such as S.aureus, E.coli and C.albicans. These peptides have lost the ability to stimulate CXCL8/IL8 release from keratinocytes. The peptides act synergistically, killing bacteria at lower concentrations when present together, and maintain activity at increased salt condition.

It is found in the secreted. It localises to the vesicle. Its function is as follows. Antimicrobial protein that is an integral component of the innate immune system. Binds to bacterial lipopolysaccharides (LPS). Acts via neutrophil N-formyl peptide receptors to enhance the release of CXCL2. Postsecretory processing generates multiple cathelicidin antimicrobial peptides with various lengths which act as a topical antimicrobial defense in sweat on skin. The unprocessed precursor form, cathelicidin antimicrobial peptide, inhibits the growth of Gram-negative E.coli and E.aerogenes with efficiencies comparable to that of the mature peptide LL-37 (in vitro). In terms of biological role, antimicrobial peptide that is an integral component of the innate immune system. Binds to bacterial lipopolysaccharides (LPS). Causes membrane permeabilization by forming transmembrane pores (in vitro). Causes lysis of E.coli. Exhibits antimicrobial activity against Gram-negative bacteria such as P.aeruginosa, S.typhimurium, E.aerogenes, E.coli and P.syringae, Gram-positive bacteria such as L.monocytogenes, S.epidermidis, S.pyogenes and S.aureus, as well as vancomycin-resistant enterococci (in vitro). Exhibits antimicrobial activity against methicillin-resistant S.aureus, P.mirabilis, and C.albicans in low-salt media, but not in media containing 100 mM NaCl (in vitro). Forms chiral supramolecular assemblies with quinolone signal (PQS) molecules of P.aeruginosa, which may lead to interference of bacterial quorum signaling and perturbance of bacterial biofilm formation. May form supramolecular fiber-like assemblies on bacterial membranes. Induces cytokine and chemokine producation as well as TNF/TNFA and CSF2/GMCSF production in normal human keratinocytes. Exhibits hemolytic activity against red blood cells. Exhibits antimicrobial activity against E.coli and B.megaterium (in vitro). This chain is Cathelicidin antimicrobial peptide, found in Trachypithecus cristatus (Silvered leaf-monkey).